We begin with the raw amino-acid sequence, 368 residues long: 4-hydroxy-3-methylbut-2-en-1-yl diphosphate synthase (flavodoxin) (368 aa).

[4Fe-4S] cluster contacts are provided by cysteine 268, cysteine 271, cysteine 303, and glutamate 310.

The protein belongs to the IspG family. It depends on [4Fe-4S] cluster as a cofactor.

It carries out the reaction (2E)-4-hydroxy-3-methylbut-2-enyl diphosphate + oxidized [flavodoxin] + H2O + 2 H(+) = 2-C-methyl-D-erythritol 2,4-cyclic diphosphate + reduced [flavodoxin]. It participates in isoprenoid biosynthesis; isopentenyl diphosphate biosynthesis via DXP pathway; isopentenyl diphosphate from 1-deoxy-D-xylulose 5-phosphate: step 5/6. In terms of biological role, converts 2C-methyl-D-erythritol 2,4-cyclodiphosphate (ME-2,4cPP) into 1-hydroxy-2-methyl-2-(E)-butenyl 4-diphosphate. The polypeptide is 4-hydroxy-3-methylbut-2-en-1-yl diphosphate synthase (flavodoxin) (Bacillus cytotoxicus (strain DSM 22905 / CIP 110041 / 391-98 / NVH 391-98)).